Here is an 858-residue protein sequence, read N- to C-terminus: Leucine--tRNA ligase (858 aa).

The short motif at 53 to 63 is the 'HIGH' region element; the sequence is PYPSGNLHMGH. The 'KMSKS' region motif lies at 622–626; sequence KMSKS. Lys625 provides a ligand contact to ATP.

This sequence belongs to the class-I aminoacyl-tRNA synthetase family.

It localises to the cytoplasm. The enzyme catalyses tRNA(Leu) + L-leucine + ATP = L-leucyl-tRNA(Leu) + AMP + diphosphate. The protein is Leucine--tRNA ligase of Prochlorococcus marinus subsp. pastoris (strain CCMP1986 / NIES-2087 / MED4).